The chain runs to 80 residues: Cell division protein ZapB (80 aa).

A coiled-coil region spans residues 3-80 (LEILEQLEAK…GLLGKMDEVE (78 aa)). A disordered region spans residues 41-60 (LEQANNGRSEVEQEAQRARD). Residues 49-60 (SEVEQEAQRARD) are compositionally biased toward basic and acidic residues.

This sequence belongs to the ZapB family. As to quaternary structure, homodimer. The ends of the coiled-coil dimer bind to each other, forming polymers. Interacts with FtsZ.

The protein localises to the cytoplasm. Functionally, non-essential, abundant cell division factor that is required for proper Z-ring formation. It is recruited early to the divisome by direct interaction with FtsZ, stimulating Z-ring assembly and thereby promoting cell division earlier in the cell cycle. Its recruitment to the Z-ring requires functional FtsA or ZipA. The protein is Cell division protein ZapB of Aliivibrio fischeri (strain ATCC 700601 / ES114) (Vibrio fischeri).